The primary structure comprises 209 residues: ATP-dependent Clp protease proteolytic subunit 2 (209 aa).

The active-site Nucleophile is S106. H131 is a catalytic residue.

This sequence belongs to the peptidase S14 family. In terms of assembly, fourteen ClpP subunits assemble into 2 heptameric rings which stack back to back to give a disk-like structure with a central cavity, resembling the structure of eukaryotic proteasomes.

It localises to the cytoplasm. It carries out the reaction Hydrolysis of proteins to small peptides in the presence of ATP and magnesium. alpha-casein is the usual test substrate. In the absence of ATP, only oligopeptides shorter than five residues are hydrolyzed (such as succinyl-Leu-Tyr-|-NHMec, and Leu-Tyr-Leu-|-Tyr-Trp, in which cleavage of the -Tyr-|-Leu- and -Tyr-|-Trp bonds also occurs).. Cleaves peptides in various proteins in a process that requires ATP hydrolysis. Has a chymotrypsin-like activity. Plays a major role in the degradation of misfolded proteins. The protein is ATP-dependent Clp protease proteolytic subunit 2 of Mesorhizobium japonicum (strain LMG 29417 / CECT 9101 / MAFF 303099) (Mesorhizobium loti (strain MAFF 303099)).